Consider the following 1141-residue polypeptide: DNA polymerase II large subunit (1141 aa).

The disordered stretch occupies residues 567–587 (AGTRVGGRMGRPGKSAPRKMK).

Belongs to the archaeal DNA polymerase II family. As to quaternary structure, heterodimer of a large subunit and a small subunit.

It carries out the reaction DNA(n) + a 2'-deoxyribonucleoside 5'-triphosphate = DNA(n+1) + diphosphate. It catalyses the reaction Exonucleolytic cleavage in the 3'- to 5'-direction to yield nucleoside 5'-phosphates.. In terms of biological role, possesses two activities: a DNA synthesis (polymerase) and an exonucleolytic activity that degrades single-stranded DNA in the 3'- to 5'-direction. Has a template-primer preference which is characteristic of a replicative DNA polymerase. In Methanocorpusculum labreanum (strain ATCC 43576 / DSM 4855 / Z), this protein is DNA polymerase II large subunit.